We begin with the raw amino-acid sequence, 199 residues long: dITP/XTP pyrophosphatase (199 aa).

A substrate-binding site is contributed by 8–13; that stretch reads SGNAGK. Asp69 acts as the Proton acceptor in catalysis. Asp69 lines the Mg(2+) pocket. Substrate contacts are provided by residues Ser70, 154–157, Lys177, and 182–183; these read FGYN and HR.

Belongs to the HAM1 NTPase family. In terms of assembly, homodimer. The cofactor is Mg(2+).

It carries out the reaction XTP + H2O = XMP + diphosphate + H(+). The catalysed reaction is dITP + H2O = dIMP + diphosphate + H(+). It catalyses the reaction ITP + H2O = IMP + diphosphate + H(+). Its function is as follows. Pyrophosphatase that catalyzes the hydrolysis of nucleoside triphosphates to their monophosphate derivatives, with a high preference for the non-canonical purine nucleotides XTP (xanthosine triphosphate), dITP (deoxyinosine triphosphate) and ITP. Seems to function as a house-cleaning enzyme that removes non-canonical purine nucleotides from the nucleotide pool, thus preventing their incorporation into DNA/RNA and avoiding chromosomal lesions. The protein is dITP/XTP pyrophosphatase of Xanthomonas axonopodis pv. citri (strain 306).